The chain runs to 159 residues: Phosphopantetheine adenylyltransferase (159 aa).

Thr-10 is a substrate binding site. ATP is bound by residues 10-11 (TF) and His-18. Substrate is bound by residues Lys-42, Met-74, and Arg-88. Residues 89 to 91 (GLR), Glu-99, and 124 to 130 (WSFISSS) contribute to the ATP site.

Belongs to the bacterial CoaD family. Homohexamer. The cofactor is Mg(2+).

The protein resides in the cytoplasm. The enzyme catalyses (R)-4'-phosphopantetheine + ATP + H(+) = 3'-dephospho-CoA + diphosphate. Its pathway is cofactor biosynthesis; coenzyme A biosynthesis; CoA from (R)-pantothenate: step 4/5. Its function is as follows. Reversibly transfers an adenylyl group from ATP to 4'-phosphopantetheine, yielding dephospho-CoA (dPCoA) and pyrophosphate. The polypeptide is Phosphopantetheine adenylyltransferase (Salmonella arizonae (strain ATCC BAA-731 / CDC346-86 / RSK2980)).